A 108-amino-acid chain; its full sequence is Putative pterin-4-alpha-carbinolamine dehydratase (108 aa).

This sequence belongs to the pterin-4-alpha-carbinolamine dehydratase family.

It carries out the reaction (4aS,6R)-4a-hydroxy-L-erythro-5,6,7,8-tetrahydrobiopterin = (6R)-L-erythro-6,7-dihydrobiopterin + H2O. This chain is Putative pterin-4-alpha-carbinolamine dehydratase, found in Bordetella avium (strain 197N).